Here is a 311-residue protein sequence, read N- to C-terminus: Protein nfe2 (311 aa).

Functionally, responsible for the nodulation efficiency and competitive ability of strain GR4 on alfalfa roots. The sequence is that of Protein nfe2 (nfe2) from Rhizobium meliloti (Ensifer meliloti).